Consider the following 184-residue polypeptide: ATP synthase subunit b, chloroplastic (184 aa).

A helical membrane pass occupies residues 27-49 (LATNPINLSVVFGVLIFFGKGVL).

This sequence belongs to the ATPase B chain family. In terms of assembly, F-type ATPases have 2 components, F(1) - the catalytic core - and F(0) - the membrane proton channel. F(1) has five subunits: alpha(3), beta(3), gamma(1), delta(1), epsilon(1). F(0) has four main subunits: a(1), b(1), b'(1) and c(10-14). The alpha and beta chains form an alternating ring which encloses part of the gamma chain. F(1) is attached to F(0) by a central stalk formed by the gamma and epsilon chains, while a peripheral stalk is formed by the delta, b and b' chains.

It localises to the plastid. It is found in the chloroplast thylakoid membrane. In terms of biological role, f(1)F(0) ATP synthase produces ATP from ADP in the presence of a proton or sodium gradient. F-type ATPases consist of two structural domains, F(1) containing the extramembraneous catalytic core and F(0) containing the membrane proton channel, linked together by a central stalk and a peripheral stalk. During catalysis, ATP synthesis in the catalytic domain of F(1) is coupled via a rotary mechanism of the central stalk subunits to proton translocation. Functionally, component of the F(0) channel, it forms part of the peripheral stalk, linking F(1) to F(0). The polypeptide is ATP synthase subunit b, chloroplastic (Arabidopsis thaliana (Mouse-ear cress)).